We begin with the raw amino-acid sequence, 496 residues long: Glycerol kinase (496 aa).

T12 serves as a coordination point for ADP. The ATP site is built by T12, T13, and S14. A sn-glycerol 3-phosphate-binding site is contributed by T12. Residue R16 coordinates ADP. 3 residues coordinate sn-glycerol 3-phosphate: R82, E83, and Y134. The glycerol site is built by R82, E83, and Y134. A Phosphohistidine; by HPr modification is found at H230. D244 lines the sn-glycerol 3-phosphate pocket. Positions 244 and 245 each coordinate glycerol. Residues T266 and G309 each coordinate ADP. The ATP site is built by T266, G309, Q313, and G410. The ADP site is built by G410 and N414.

This sequence belongs to the FGGY kinase family. Homotetramer and homodimer (in equilibrium). Post-translationally, the phosphoenolpyruvate-dependent sugar phosphotransferase system (PTS), including enzyme I, and histidine-containing protein (HPr) are required for the phosphorylation, which leads to the activation of the enzyme.

The enzyme catalyses glycerol + ATP = sn-glycerol 3-phosphate + ADP + H(+). It participates in polyol metabolism; glycerol degradation via glycerol kinase pathway; sn-glycerol 3-phosphate from glycerol: step 1/1. Activated by phosphorylation and inhibited by fructose 1,6-bisphosphate (FBP). Functionally, key enzyme in the regulation of glycerol uptake and metabolism. Catalyzes the phosphorylation of glycerol to yield sn-glycerol 3-phosphate. The polypeptide is Glycerol kinase (Bacillus cytotoxicus (strain DSM 22905 / CIP 110041 / 391-98 / NVH 391-98)).